The primary structure comprises 585 residues: MENSRIPGEHFFTTSDNTALFYRHWPALQPGAKKVIVLFHRGHEHSGRLQHLVDELAMPDTAFYAWDARGHGKSSGPRGYSPSLARSVRDVDEFVRFAASDSQVGLEEVVVIAQSVGAVLVATWIHDYAPAIRGLVLASPAFKVKLYVPLARPALALWHRLRGLFFINSYVKGRYLTHDRQRGASFNNDPLITRAIAVNILLDLYKTSERIIRDAAAITLPTQLLISGDDYVVHRQPQIDFYQRLRSPLKELHLLPGFYHDTLGEENRALAFEKMQSFISRLYANKSQKFDYQHEDCTGPSADRWRLLSGGPVPLSPVDLAYRFMRKAMKLFGTHSSGLHLGMSTGFDSGSSLDYVYQNQPQGSNAFGRLVDKIYLNSVGWRGIRQRKTHLQILIKQAVADLHAKGLAVRVVDIAAGHGRYVLDALANEPAVSDILLRDYSELNVAQGQEMIAQRGMSGRVRFEQGDAFNPEELSALTPRPTLAIVSGLYELFPENEQVKNSLAGLANAIEPGGILIYTGQPWHPQLEMIAGVLTSHKDGKPWVMRVRSQGEMDSLVRDAGFDKCTQRIDEWGIFTVSMAVRRDN.

This is an uncharacterized protein from Escherichia coli (strain K12).